The following is a 176-amino-acid chain: MVSPAWCSIALALLLALHEGKGQAAATMEQPASAPKGRGPHLRFRRCSCNSWLDKECVYFCHLDIIWVNTAGQTAPYGLGNPPQRRRRSLPKRCECSSAGDSACATFCHRRPWPEAEVTSSSQGPAAVLETSKTWTAAGDLLQKLRDISAAKLQFVRLRPELTREAIPAHSRRRKR.

Residues 1–22 (MVSPAWCSIALALLLALHEGKG) form the signal peptide. The propeptide occupies 23-44 (QAAATMEQPASAPKGRGPHLRF). Cystine bridges form between C47–C61 and C49–C57. The propeptide occupies 68 to 176 (VNTAGQTAPY…IPAHSRRRKR (109 aa)). The segment at 94-109 (CECSSAGDSACATFCH) is endothelin-like.

Belongs to the endothelin/sarafotoxin family.

It is found in the secreted. Its function is as follows. Vasoconstrictor. The polypeptide is Endothelin-2 (Edn2) (Rattus norvegicus (Rat)).